We begin with the raw amino-acid sequence, 230 residues long: UPF0758 protein Daud_1467 (230 aa).

The 123-residue stretch at 108 to 230 folds into the MPN domain; sequence TVRTPEEAAG…FTSLKLEGLF (123 aa). 3 residues coordinate Zn(2+): H179, H181, and D192. The JAMM motif signature appears at 179–192; that stretch reads HNHPSGDPAPSPQD.

It belongs to the UPF0758 family.

This Desulforudis audaxviator (strain MP104C) protein is UPF0758 protein Daud_1467.